The sequence spans 197 residues: 3-isopropylmalate dehydratase small subunit (197 aa).

This sequence belongs to the LeuD family. LeuD type 1 subfamily. As to quaternary structure, heterodimer of LeuC and LeuD.

It catalyses the reaction (2R,3S)-3-isopropylmalate = (2S)-2-isopropylmalate. It participates in amino-acid biosynthesis; L-leucine biosynthesis; L-leucine from 3-methyl-2-oxobutanoate: step 2/4. In terms of biological role, catalyzes the isomerization between 2-isopropylmalate and 3-isopropylmalate, via the formation of 2-isopropylmaleate. The polypeptide is 3-isopropylmalate dehydratase small subunit (Shouchella clausii (strain KSM-K16) (Alkalihalobacillus clausii)).